Consider the following 426-residue polypeptide: Glutamate-1-semialdehyde 2,1-aminomutase (426 aa).

Lys-265 bears the N6-(pyridoxal phosphate)lysine mark.

This sequence belongs to the class-III pyridoxal-phosphate-dependent aminotransferase family. HemL subfamily. Homodimer. The cofactor is pyridoxal 5'-phosphate.

It localises to the cytoplasm. The enzyme catalyses (S)-4-amino-5-oxopentanoate = 5-aminolevulinate. It participates in porphyrin-containing compound metabolism; protoporphyrin-IX biosynthesis; 5-aminolevulinate from L-glutamyl-tRNA(Glu): step 2/2. The polypeptide is Glutamate-1-semialdehyde 2,1-aminomutase (Escherichia coli O7:K1 (strain IAI39 / ExPEC)).